A 49-amino-acid polypeptide reads, in one-letter code: Turripeptide OL47 (49 aa).

The segment at 28–49 is disordered; it reads RSDTEKKCTGGPDPCPPRQWPD. A compositionally biased stretch (pro residues) spans 40-49; the sequence is DPCPPRQWPD.

Post-translationally, contains 4 disulfide bonds. As to expression, expressed by the venom duct.

It localises to the secreted. Its function is as follows. Acts as a neurotoxin by inhibiting an ion channel. The chain is Turripeptide OL47 from Iotyrris olangoensis (Sea snail).